Here is a 198-residue protein sequence, read N- to C-terminus: HTH-type transcriptional regulator BetI (198 aa).

The region spanning 8–68 (PLRRRELIDA…ATMRHLLREL (61 aa)) is the HTH tetR-type domain. Positions 31 to 50 (TVAQIAHEAGVSPALAHHYF) form a DNA-binding region, H-T-H motif.

It functions in the pathway amine and polyamine biosynthesis; betaine biosynthesis via choline pathway [regulation]. Functionally, repressor involved in the biosynthesis of the osmoprotectant glycine betaine. It represses transcription of the choline transporter BetT and the genes of BetAB involved in the synthesis of glycine betaine. The chain is HTH-type transcriptional regulator BetI from Brucella canis (strain ATCC 23365 / NCTC 10854 / RM-666).